Reading from the N-terminus, the 442-residue chain is MALGGEERKRRKGSERRQSSGDGVSCAASDYLVGQVADSLRGGPRPPGGGTGRLAALFSTAEPSAPPVFVPVPQETSKKRKLDDDDDDEEESVSQTKKPVLQEPSRKVKVKKLSDADKRLANRESALASADLEEELHQDQGQGRRRRSQSRGKVADGEALDVALSLAKDGGQRTKIPVNPEEERLKNERTVFVGNLPVTCNKKKLKSFFKEYGQVESVRFRSVMPAEGTLTKKLAAIKRKFHPDQKSINAYVVFKDESAAAKALQRNGAQIAEGFRIRVDLASETASRDKRSVFVGNLPYKIEDSALEEHFLDCGSIVAVRIVRNPLTGVGRGFGYVLFENTDAVHLALKLNNSELMGRKLRVMRSVNKEKLKQQNSNPSLKKDVIKPKQRLNFTSKEGKFHSKEGKFHSKNAFIGEKAVLMKKKKKGQKKKVQMKKPRKQQ.

Disordered regions lie at residues 1–26 (MALG…GVSC) and 60–157 (TAEP…VADG). A compositionally biased stretch (basic and acidic residues) spans 112 to 122 (KLSDADKRLAN). At Lys-153 the chain carries N6-acetyllysine. RRM domains are found at residues 189–284 (RTVF…LASE) and 291–368 (RSVF…RSVN). Lys-246 participates in a covalent cross-link: Glycyl lysine isopeptide (Lys-Gly) (interchain with G-Cter in SUMO2). Ser-292 carries the post-translational modification Phosphoserine. A disordered region spans residues 418–442 (KAVLMKKKKKGQKKKVQMKKPRKQQ). Positions 421–442 (LMKKKKKGQKKKVQMKKPRKQQ) are enriched in basic residues.

This sequence belongs to the RRM RBM34 family.

It is found in the nucleus. The protein resides in the nucleolus. This is RNA-binding protein 34 (Rbm34) from Mus musculus (Mouse).